The chain runs to 273 residues: Putative pyruvate, phosphate dikinase regulatory protein (273 aa).

Position 153–160 (153–160 (GVSRTSKT)) interacts with ADP.

Belongs to the pyruvate, phosphate/water dikinase regulatory protein family. PDRP subfamily.

The catalysed reaction is N(tele)-phospho-L-histidyl/L-threonyl-[pyruvate, phosphate dikinase] + ADP = N(tele)-phospho-L-histidyl/O-phospho-L-threonyl-[pyruvate, phosphate dikinase] + AMP + H(+). The enzyme catalyses N(tele)-phospho-L-histidyl/O-phospho-L-threonyl-[pyruvate, phosphate dikinase] + phosphate + H(+) = N(tele)-phospho-L-histidyl/L-threonyl-[pyruvate, phosphate dikinase] + diphosphate. In terms of biological role, bifunctional serine/threonine kinase and phosphorylase involved in the regulation of the pyruvate, phosphate dikinase (PPDK) by catalyzing its phosphorylation/dephosphorylation. The sequence is that of Putative pyruvate, phosphate dikinase regulatory protein from Sinorhizobium fredii (strain NBRC 101917 / NGR234).